The primary structure comprises 440 residues: 23S rRNA (uracil(1939)-C(5))-methyltransferase RlmD (440 aa).

The 59-residue stretch at 11–69 folds into the TRAM domain; that stretch reads STLDTKHQPVTIERLDHQGSGLAFLHKKPLFVDGALPGEEVLIQLTENKSKYARGQLIK. Positions 82, 88, 91, and 169 each coordinate [4Fe-4S] cluster. S-adenosyl-L-methionine contacts are provided by Gln-272, Phe-301, Asn-306, Glu-322, Asn-349, and Asp-370. Cys-396 (nucleophile) is an active-site residue.

Belongs to the class I-like SAM-binding methyltransferase superfamily. RNA M5U methyltransferase family. RlmD subfamily.

It carries out the reaction uridine(1939) in 23S rRNA + S-adenosyl-L-methionine = 5-methyluridine(1939) in 23S rRNA + S-adenosyl-L-homocysteine + H(+). Catalyzes the formation of 5-methyl-uridine at position 1939 (m5U1939) in 23S rRNA. The chain is 23S rRNA (uracil(1939)-C(5))-methyltransferase RlmD from Vibrio cholerae serotype O1 (strain M66-2).